A 590-amino-acid chain; its full sequence is MHRYRSHTCGALRESNIGETIRLSGWVHRVRDHGGVLFIDLRDHYGLTQCVVDPDSPAFSLAEKLRSEFVIKMDGKVRRRPEGTDNDDLPTGKIEIYVSEIEVLGPAGDLPLPVFGDQEYPEDIRLKYRFLDLRREKLHQNIMTRVEIIKSMRRRMEGQGFFEFNTPILTASSPEGARDFLVPSRIHPGKFYALPQAPQQYKQLLMMSGFDRYFQIAPCFRDEDPRADRLPGEFYQLDVEMSFVTQEDVFAAMEPVITGVFEEFAKGKPVSKNWRRIPFAEALRKYGSDKPDLRNPIEMQEVSEHFRGSGFKVFARMLEDPKNQVWAIPAPGGGSRAFCDRMNSWAQGEGQPGLGYIMWREGGEGAGPLANNIGPERTAAIRAQIGVKEGDAAFFVAGDPDKFWKFSGLARNKVGEELNLTDKERFELAWIVDFPMYEYNEDDKKVDFSHNPFSMPQGGLEALKGQDPLTIKAFQYDITCNGYEIASGGIRNHVPEAMVKAFEIAGYGEQEVVDRFGGMYRAFQYGAPPHGGMAAGVDRIVMLLCGTTNLREISLFPMNQQAMDLLMGAPSEATTKQLRELHVRVNLPQK.

An L-aspartate-binding site is contributed by Glu-175. The interval 199–202 (QQYK) is aspartate. Arg-221 and His-450 together coordinate L-aspartate. 221–223 (RDE) is a binding site for ATP. Glu-484 is a binding site for ATP. Arg-491 contacts L-aspartate. An ATP-binding site is contributed by 536-539 (GVDR).

Belongs to the class-II aminoacyl-tRNA synthetase family. Type 1 subfamily. In terms of assembly, homodimer.

The protein localises to the cytoplasm. It carries out the reaction tRNA(Asx) + L-aspartate + ATP = L-aspartyl-tRNA(Asx) + AMP + diphosphate. Its function is as follows. Aspartyl-tRNA synthetase with relaxed tRNA specificity since it is able to aspartylate not only its cognate tRNA(Asp) but also tRNA(Asn). Reaction proceeds in two steps: L-aspartate is first activated by ATP to form Asp-AMP and then transferred to the acceptor end of tRNA(Asp/Asn). This chain is Aspartate--tRNA(Asp/Asn) ligase, found in Bradyrhizobium diazoefficiens (strain JCM 10833 / BCRC 13528 / IAM 13628 / NBRC 14792 / USDA 110).